A 223-amino-acid chain; its full sequence is Type III pantothenate kinase (223 aa).

Residue 17–24 (DIGNTRIH) coordinates ATP. Substrate-binding positions include tyrosine 81 and 85–88 (GIDR). Aspartate 87 (proton acceptor) is an active-site residue. Residue aspartate 102 coordinates K(+). Serine 105 provides a ligand contact to ATP. Position 157 (threonine 157) interacts with substrate.

This sequence belongs to the type III pantothenate kinase family. As to quaternary structure, homodimer. The cofactor is NH4(+). K(+) serves as cofactor.

It is found in the cytoplasm. The enzyme catalyses (R)-pantothenate + ATP = (R)-4'-phosphopantothenate + ADP + H(+). The protein operates within cofactor biosynthesis; coenzyme A biosynthesis; CoA from (R)-pantothenate: step 1/5. Functionally, catalyzes the phosphorylation of pantothenate (Pan), the first step in CoA biosynthesis. This chain is Type III pantothenate kinase, found in Helicobacter pylori (strain J99 / ATCC 700824) (Campylobacter pylori J99).